The sequence spans 312 residues: Olfactory receptor 4L1 (312 aa).

The Extracellular portion of the chain corresponds to 1–25 (MDLKNGSLVTEFILLGFFGRWELQI). N-linked (GlcNAc...) asparagine glycosylation is present at Asn5. Residues 26-49 (FFFVTFSLIYGATVMGNILIMVTV) traverse the membrane as a helical segment. Topologically, residues 50–57 (TCRSTLHS) are cytoplasmic. A helical transmembrane segment spans residues 58 to 79 (PLYFLLGNLSFLDMCLSTATTP). Residues 80 to 100 (KMIIDLLTDHKTISVWGCVTQ) are Extracellular-facing. A disulfide bridge links Cys97 with Cys189. Residues 101–120 (MFFMHFFGGAEMTLLIIMAF) traverse the membrane as a helical segment. Residues 121–139 (DRYVAICKPLHYRTIMSHK) are Cytoplasmic-facing. A helical transmembrane segment spans residues 140–158 (LLKGFAILSWIIGFLHSIS). Over 159–195 (QIVLTMNLPFCGHNVINNIFCDLPLVIKLACIETYTL) the chain is Extracellular. A helical transmembrane segment spans residues 196–219 (ELFVIADSGLLSFTCFILLLVSYI). At 220–235 (VILVSVPKKSSHGLSK) the chain is on the cytoplasmic side. The chain crosses the membrane as a helical span at residues 236–258 (ALSTLSAHIIVVTLFFGPCIFIY). Topologically, residues 259–269 (VWPFSSLASNK) are extracellular. Residue Asn268 is glycosylated (N-linked (GlcNAc...) asparagine). Residues 270–289 (TLAVFYTVITPLLNPSIYTL) form a helical membrane-spanning segment. Topologically, residues 290–312 (RNKKMQEAIRKLRFQYVSSAQNF) are cytoplasmic.

This sequence belongs to the G-protein coupled receptor 1 family.

The protein localises to the cell membrane. In terms of biological role, odorant receptor. The protein is Olfactory receptor 4L1 (OR4L1) of Homo sapiens (Human).